The following is a 149-amino-acid chain: Ribonuclease pancreatic (149 aa).

The N-terminal stretch at 1–25 (MGLEKSLILFPLFFLLLGWVQPSLG) is a signal peptide. Residues lysine 32 and arginine 35 each contribute to the substrate site. Histidine 37 serves as the catalytic Proton acceptor. 4 cysteine pairs are disulfide-bonded: cysteine 51/cysteine 109, cysteine 65/cysteine 120, cysteine 83/cysteine 135, and cysteine 90/cysteine 97. Residues 66 to 70 (KPVNT) and lysine 91 each bind substrate. Histidine 144 functions as the Proton donor in the catalytic mechanism.

This sequence belongs to the pancreatic ribonuclease family. As to quaternary structure, monomer. Interacts with and forms tight 1:1 complexes with RNH1. Dimerization of two such complexes may occur. Interaction with RNH1 inhibits this protein. In terms of tissue distribution, pancreas.

Its subcellular location is the secreted. The catalysed reaction is an [RNA] containing cytidine + H2O = an [RNA]-3'-cytidine-3'-phosphate + a 5'-hydroxy-ribonucleotide-3'-[RNA].. It carries out the reaction an [RNA] containing uridine + H2O = an [RNA]-3'-uridine-3'-phosphate + a 5'-hydroxy-ribonucleotide-3'-[RNA].. Endonuclease that catalyzes the cleavage of RNA on the 3' side of pyrimidine nucleotides. Acts on single-stranded and double-stranded RNA. This Mus musculus (Mouse) protein is Ribonuclease pancreatic (Rnase1).